Reading from the N-terminus, the 231-residue chain is Superoxide dismutase [Mn], mitochondrial (231 aa).

The transit peptide at 1–27 (MALRTLASRKTLAAAALPLAAAAAARG) directs the protein to the mitochondrion. Mn(2+) contacts are provided by histidine 55, histidine 103, aspartate 192, and histidine 196.

It belongs to the iron/manganese superoxide dismutase family. As to quaternary structure, homotetramer. It depends on Mn(2+) as a cofactor.

It is found in the mitochondrion matrix. It catalyses the reaction 2 superoxide + 2 H(+) = H2O2 + O2. In terms of biological role, destroys superoxide anion radicals which are normally produced within the cells and which are toxic to biological systems. This is Superoxide dismutase [Mn], mitochondrial (SODA) from Oryza sativa subsp. japonica (Rice).